The chain runs to 516 residues: 3-ketoacyl-CoA synthase 4 (516 aa).

2 helical membrane-spanning segments follow: residues 48–68 (LISN…SVEA) and 87–107 (LVSI…YVMT). In terms of domain architecture, FAE spans 104–393 (YVMTRPRPVY…FFMTLVVKKL (290 aa)). Residues Cys-248, His-327, His-411, His-415, His-444, and Asn-448 contribute to the active site.

It belongs to the thiolase-like superfamily. Chalcone/stilbene synthases family. As to expression, expressed at low levels in siliques, flowers, leaves and stems.

Its subcellular location is the membrane. The enzyme catalyses a very-long-chain acyl-CoA + malonyl-CoA + H(+) = a very-long-chain 3-oxoacyl-CoA + CO2 + CoA. Its pathway is lipid metabolism; fatty acid biosynthesis. The protein is 3-ketoacyl-CoA synthase 4 of Arabidopsis thaliana (Mouse-ear cress).